The sequence spans 431 residues: Interleukin-11 receptor subunit alpha (431 aa).

Positions 1 to 23 are cleaved as a signal peptide; it reads MSSSRSGLTRVLVAVATALVSSS. Over 24 to 371 the chain is Extracellular; sequence TPCPQAWGPP…DPLEQVAVLA (348 aa). The Ig-like C2-type domain maps to 27–110; the sequence is PQAWGPPGVQ…FGGMVTLKLG (84 aa). Intrachain disulfides connect Cys48–Cys94, Cys120–Cys130, and Cys170–Cys180. Fibronectin type-III domains are found at residues 112–219 and 220–317; these read PPAR…LRPD and PPQG…TPST. A glycan (N-linked (GlcNAc...) asparagine) is linked at Asn127. The interval 151-170 is disordered; it reads KTLPGAESQRESPSTGPWPC. Residue Asn194 is glycosylated (N-linked (GlcNAc...) asparagine). The WSXWS motif signature appears at 304–308; sequence WSAWS. The tract at residues 310–360 is disordered; that stretch reads EAWGTPSTGPLRDEVPDGSRGHEQKLEAAAQEDSPAPPSPSLQPDPRPLDH. Residues 320–335 show a composition bias toward basic and acidic residues; the sequence is LRDEVPDGSRGHEQKL. Residues 344-355 are compositionally biased toward pro residues; that stretch reads PAPPSPSLQPDP. Residues 372 to 392 traverse the membrane as a helical segment; sequence SLGIFSFLGLAVGALALGLWL. The Cytoplasmic portion of the chain corresponds to 393–431; it reads RLRRSGKDGPQKPGFLAPMIPGDKLPGIPNLQRTPENFS. The disordered stretch occupies residues 402-431; sequence PQKPGFLAPMIPGDKLPGIPNLQRTPENFS.

It belongs to the type I cytokine receptor family. Type 3 subfamily. On IL11 binding, forms a multimer complex with IL6ST/gp130. A short soluble form is also released from the membrane by proteolysis. The sIL11RA is formed either by limited proteolysis of membrane-bound receptors, a process referred to as ectodomain shedding, or directly secreted from the cells after alternative mRNA splicing. mIL11RA is cleaved by the proteases ADAM10, ELANE and PRTN3.

It localises to the membrane. The protein resides in the secreted. In terms of biological role, receptor for interleukin-11 (IL11). The receptor systems for IL6, LIF, OSM, CNTF, IL11 and CT1 can utilize IL6ST for initiating signal transmission. The IL11/IL11RA/IL6ST complex may be involved in the control of proliferation and/or differentiation of skeletogenic progenitor or other mesenchymal cells. Essential for the normal development of craniofacial bones and teeth. Restricts suture fusion and tooth number. Its function is as follows. Soluble form of IL11 receptor (sIL11RA) that acts as an agonist of IL11 activity. The IL11:sIL11RA complex binds to IL6ST/gp130 on cell surfaces and induces signaling also on cells that do not express membrane-bound IL11RA in a process called IL11 trans-signaling. The polypeptide is Interleukin-11 receptor subunit alpha (Rattus norvegicus (Rat)).